Here is a 395-residue protein sequence, read N- to C-terminus: Elongation factor Tu (395 aa).

The tr-type G domain occupies 10–205; the sequence is KVHMNVGTIG…AMDSYFEDPV (196 aa). Residues 19-26 are G1; that stretch reads GHVDHGKT. 19 to 26 serves as a coordination point for GTP; it reads GHVDHGKT. T26 lines the Mg(2+) pocket. The tract at residues 60–64 is G2; sequence GITIN. Residues 81–84 are G3; that stretch reads DCPG. Residues 81 to 85 and 136 to 139 each bind GTP; these read DCPGH and NKVD. The interval 136-139 is G4; sequence NKVD. The interval 173-175 is G5; that stretch reads SAF.

The protein belongs to the TRAFAC class translation factor GTPase superfamily. Classic translation factor GTPase family. EF-Tu/EF-1A subfamily. In terms of assembly, monomer.

It localises to the cytoplasm. It catalyses the reaction GTP + H2O = GDP + phosphate + H(+). GTP hydrolase that promotes the GTP-dependent binding of aminoacyl-tRNA to the A-site of ribosomes during protein biosynthesis. This is Elongation factor Tu from Treponema pallidum (strain Nichols).